The following is a 940-amino-acid chain: Isoleucine--tRNA ligase (940 aa).

A 'HIGH' region motif is present at residues 58-68; that stretch reads PYANGNIHIGH. An L-isoleucyl-5'-AMP-binding site is contributed by Glu563. Residues 604–608 carry the 'KMSKS' region motif; that stretch reads KMSKS. Lys607 is an ATP binding site. Zn(2+) contacts are provided by Cys903, Cys906, Cys923, and Cys926.

This sequence belongs to the class-I aminoacyl-tRNA synthetase family. IleS type 1 subfamily. As to quaternary structure, monomer. Zn(2+) is required as a cofactor.

The protein localises to the cytoplasm. The enzyme catalyses tRNA(Ile) + L-isoleucine + ATP = L-isoleucyl-tRNA(Ile) + AMP + diphosphate. Functionally, catalyzes the attachment of isoleucine to tRNA(Ile). As IleRS can inadvertently accommodate and process structurally similar amino acids such as valine, to avoid such errors it has two additional distinct tRNA(Ile)-dependent editing activities. One activity is designated as 'pretransfer' editing and involves the hydrolysis of activated Val-AMP. The other activity is designated 'posttransfer' editing and involves deacylation of mischarged Val-tRNA(Ile). The sequence is that of Isoleucine--tRNA ligase from Buchnera aphidicola subsp. Acyrthosiphon pisum (strain 5A).